The sequence spans 620 residues: Chaperone protein HscA homolog (620 aa).

The protein belongs to the heat shock protein 70 family.

Functionally, chaperone involved in the maturation of iron-sulfur cluster-containing proteins. Has a low intrinsic ATPase activity which is markedly stimulated by HscB. The chain is Chaperone protein HscA homolog from Shewanella sp. (strain MR-4).